A 412-amino-acid polypeptide reads, in one-letter code: Multifunctional CCA protein (412 aa).

Residues glycine 8 and arginine 11 each contribute to the ATP site. CTP-binding residues include glycine 8 and arginine 11. Glutamate 21 and aspartate 23 together coordinate Mg(2+). Positions 91, 137, and 140 each coordinate ATP. CTP-binding residues include arginine 91, arginine 137, and arginine 140. The HD domain occupies 228-329; it reads CGIHTLMSLQ…WRLLQRLDVL (102 aa).

Belongs to the tRNA nucleotidyltransferase/poly(A) polymerase family. Bacterial CCA-adding enzyme type 1 subfamily. In terms of assembly, monomer. Can also form homodimers and oligomers. The cofactor is Mg(2+). Ni(2+) is required as a cofactor.

It carries out the reaction a tRNA precursor + 2 CTP + ATP = a tRNA with a 3' CCA end + 3 diphosphate. The catalysed reaction is a tRNA with a 3' CCA end + 2 CTP + ATP = a tRNA with a 3' CCACCA end + 3 diphosphate. Functionally, catalyzes the addition and repair of the essential 3'-terminal CCA sequence in tRNAs without using a nucleic acid template. Adds these three nucleotides in the order of C, C, and A to the tRNA nucleotide-73, using CTP and ATP as substrates and producing inorganic pyrophosphate. tRNA 3'-terminal CCA addition is required both for tRNA processing and repair. Also involved in tRNA surveillance by mediating tandem CCA addition to generate a CCACCA at the 3' terminus of unstable tRNAs. While stable tRNAs receive only 3'-terminal CCA, unstable tRNAs are marked with CCACCA and rapidly degraded. This chain is Multifunctional CCA protein, found in Acinetobacter baumannii (strain AB307-0294).